A 348-amino-acid polypeptide reads, in one-letter code: UDP-3-O-acylglucosamine N-acyltransferase (348 aa).

Catalysis depends on His241, which acts as the Proton acceptor.

This sequence belongs to the transferase hexapeptide repeat family. LpxD subfamily. Homotrimer.

It carries out the reaction a UDP-3-O-[(3R)-3-hydroxyacyl]-alpha-D-glucosamine + a (3R)-hydroxyacyl-[ACP] = a UDP-2-N,3-O-bis[(3R)-3-hydroxyacyl]-alpha-D-glucosamine + holo-[ACP] + H(+). It participates in bacterial outer membrane biogenesis; LPS lipid A biosynthesis. In terms of biological role, catalyzes the N-acylation of UDP-3-O-acylglucosamine using 3-hydroxyacyl-ACP as the acyl donor. Is involved in the biosynthesis of lipid A, a phosphorylated glycolipid that anchors the lipopolysaccharide to the outer membrane of the cell. In Neisseria meningitidis serogroup C / serotype 2a (strain ATCC 700532 / DSM 15464 / FAM18), this protein is UDP-3-O-acylglucosamine N-acyltransferase.